Here is a 308-residue protein sequence, read N- to C-terminus: Acetaldehyde dehydrogenase 2 (308 aa).

Position 12 to 15 (12 to 15) interacts with NAD(+); sequence SGNI. Cys127 serves as the catalytic Acyl-thioester intermediate. NAD(+) contacts are provided by residues 162 to 170 and Asn281; that span reads SAGPGTRAN.

This sequence belongs to the acetaldehyde dehydrogenase family.

The catalysed reaction is acetaldehyde + NAD(+) + CoA = acetyl-CoA + NADH + H(+). The sequence is that of Acetaldehyde dehydrogenase 2 from Mycobacterium marinum (strain ATCC BAA-535 / M).